Consider the following 390-residue polypeptide: GTPase Obg (390 aa).

The 159-residue stretch at 1–159 folds into the Obg domain; that stretch reads MKFVDEAVVK…REIRLELLLL (159 aa). Residues 160–333 form the OBG-type G domain; that stretch reads ADVGMLGLPN…LCYKLADFME (174 aa). GTP-binding positions include 166–173, 191–195, 213–216, 283–286, and 314–316; these read GLPNAGKS, FTTLI, DIPG, NKVD, and SAI. Mg(2+)-binding residues include Ser-173 and Thr-193. The segment covering 367-382 has biased composition (acidic residues); it reads TEDDDDWDDWDDEEDD. The segment at 367 to 390 is disordered; sequence TEDDDDWDDWDDEEDDGHVVYVRD.

The protein belongs to the TRAFAC class OBG-HflX-like GTPase superfamily. OBG GTPase family. Monomer. It depends on Mg(2+) as a cofactor.

It localises to the cytoplasm. Functionally, an essential GTPase which binds GTP, GDP and possibly (p)ppGpp with moderate affinity, with high nucleotide exchange rates and a fairly low GTP hydrolysis rate. Plays a role in control of the cell cycle, stress response, ribosome biogenesis and in those bacteria that undergo differentiation, in morphogenesis control. This Vibrio parahaemolyticus serotype O3:K6 (strain RIMD 2210633) protein is GTPase Obg.